A 365-amino-acid chain; its full sequence is 2-aminoethylphosphonate--pyruvate transaminase (365 aa).

Lys-194 is modified (N6-(pyridoxal phosphate)lysine).

The protein belongs to the class-V pyridoxal-phosphate-dependent aminotransferase family. PhnW subfamily. Homodimer. Pyridoxal 5'-phosphate serves as cofactor.

The enzyme catalyses (2-aminoethyl)phosphonate + pyruvate = phosphonoacetaldehyde + L-alanine. Functionally, involved in phosphonate degradation. In Bacillus cereus (strain G9842), this protein is 2-aminoethylphosphonate--pyruvate transaminase.